The primary structure comprises 406 residues: Cysteine--tRNA ligase (406 aa).

Cys16 is a binding site for Zn(2+). Residues 18 to 28 (PTVYSDVHIGN) carry the 'HIGH' region motif. The Zn(2+) site is built by Cys192, His218, and Glu222. Positions 250 to 254 (KMAKS) match the 'KMSKS' region motif. ATP is bound at residue Lys253.

It belongs to the class-I aminoacyl-tRNA synthetase family. As to quaternary structure, monomer. Zn(2+) serves as cofactor.

Its subcellular location is the cytoplasm. The catalysed reaction is tRNA(Cys) + L-cysteine + ATP = L-cysteinyl-tRNA(Cys) + AMP + diphosphate. The protein is Cysteine--tRNA ligase of Mesomycoplasma hyopneumoniae (strain J / ATCC 25934 / NCTC 10110) (Mycoplasma hyopneumoniae).